A 292-amino-acid polypeptide reads, in one-letter code: Cyclin-dependent kinase A-2 (292 aa).

The region spanning 4–286 (YEKVEKIGEG…ARAALEHEYF (283 aa)) is the Protein kinase domain. ATP contacts are provided by residues 10–18 (IGEGTYGVV) and Lys33. At Thr14 the chain carries Phosphothreonine. Tyr15 carries the phosphotyrosine modification. The active-site Proton acceptor is Asp126. Thr160 carries the phosphothreonine modification.

It belongs to the protein kinase superfamily. CMGC Ser/Thr protein kinase family. CDC2/CDKX subfamily. In terms of tissue distribution, expressed in the dividing region of the root apex and in differentiated cells such as those in the sclerenchyma, pericycle and parenchyma of the central cylinder. Expressed in the intercalary meristem and the elongation zone of internodes.

The enzyme catalyses L-seryl-[protein] + ATP = O-phospho-L-seryl-[protein] + ADP + H(+). It carries out the reaction L-threonyl-[protein] + ATP = O-phospho-L-threonyl-[protein] + ADP + H(+). The catalysed reaction is [DNA-directed RNA polymerase] + ATP = phospho-[DNA-directed RNA polymerase] + ADP + H(+). In Oryza sativa subsp. japonica (Rice), this protein is Cyclin-dependent kinase A-2 (CDKA-2).